A 500-amino-acid chain; its full sequence is uncharacterized protein (500 aa).

A helical transmembrane segment spans residues 27–47 (IFALILIVFGFIIAPLLPGIF).

The protein resides in the membrane. This is an uncharacterized protein from Borreliella burgdorferi (strain ATCC 35210 / DSM 4680 / CIP 102532 / B31) (Borrelia burgdorferi).